The chain runs to 156 residues: MNLNATILGQAIAFILFVWFCMKYVWPPLMAAIEKRQKEIADGLASAERAHKDLDLAKASATDQLKKAKAEAQVIIEQANKRRAQILDEAKTEAEQERTKIVAQAQAEIEAERKRAREELRKQVAILAVAGAEKIIERSVDEAANSDIVDKLVAEL.

A helical membrane pass occupies residues 11–31 (AIAFILFVWFCMKYVWPPLMA).

This sequence belongs to the ATPase B chain family. In terms of assembly, F-type ATPases have 2 components, F(1) - the catalytic core - and F(0) - the membrane proton channel. F(1) has five subunits: alpha(3), beta(3), gamma(1), delta(1), epsilon(1). F(0) has three main subunits: a(1), b(2) and c(10-14). The alpha and beta chains form an alternating ring which encloses part of the gamma chain. F(1) is attached to F(0) by a central stalk formed by the gamma and epsilon chains, while a peripheral stalk is formed by the delta and b chains.

Its subcellular location is the cell inner membrane. Its function is as follows. F(1)F(0) ATP synthase produces ATP from ADP in the presence of a proton or sodium gradient. F-type ATPases consist of two structural domains, F(1) containing the extramembraneous catalytic core and F(0) containing the membrane proton channel, linked together by a central stalk and a peripheral stalk. During catalysis, ATP synthesis in the catalytic domain of F(1) is coupled via a rotary mechanism of the central stalk subunits to proton translocation. Component of the F(0) channel, it forms part of the peripheral stalk, linking F(1) to F(0). This Salmonella agona (strain SL483) protein is ATP synthase subunit b.